Here is an 847-residue protein sequence, read N- to C-terminus: Endo-beta-N-acetylglucosaminidase EndoSd (847 aa).

Residues 1-36 (MDKRLLVKRTLGCVCAATLMGAILATHHDSLISVKA) form the signal peptide. Residues 65–377 (PLYAGYFRTW…HPVVDNISHT (313 aa)) enclose the GH18 domain. Residue histidine 107 coordinates a glycoprotein. The Proton donor role is filled by glutamate 186. 7 residues coordinate a glycoprotein: glutamate 188, glutamine 250, tyrosine 252, glutamate 288, glutamate 289, asparagine 295, and tyrosine 339. LRR repeat units follow at residues 423-446 (LERY…LEKL), 447-470 (SHLQ…ILPE), 483-506 (MTGL…DVNG), and 507-530 (LTHL…ADRK). The carbohydrate-binding module (CBM) stretch occupies residues 683–836 (MENLAKGAKV…YTELQILGQR (154 aa)). Lysine 704, aspartate 707, and glutamate 829 together coordinate Ca(2+).

Belongs to the glycosyl hydrolase 18 family.

The protein localises to the secreted. It is found in the host extracellular space. The enzyme catalyses an N(4)-(oligosaccharide-(1-&gt;3)-[oligosaccharide-(1-&gt;6)]-beta-D-Man-(1-&gt;4)-beta-D-GlcNAc-(1-&gt;4)-alpha-D-GlcNAc)-L-asparaginyl-[protein] + H2O = an oligosaccharide-(1-&gt;3)-[oligosaccharide-(1-&gt;6)]-beta-D-Man-(1-&gt;4)-D-GlcNAc + N(4)-(N-acetyl-beta-D-glucosaminyl)-L-asparaginyl-[protein]. In terms of biological role, endoglucosidase that acts as a host immune evasion factor by mediating hydrolysis of the N-linked glycan from the Fc region of host immunoglobulin-gamma (IgG) during infection. Specifically catalyzes the hydrolysis of the beta-1,4 linkage between the first two N-acetylglucosamine residues of the complex-type N-linked glycan located on 'Asn-297' of the Fc region of IgG antibodies (IGHG1, IGHG2, IGHG3 or IGHG4), thereby preventing interaction between IgGs and Fc receptors and ability to activate the complement pathway. Shows a specificity for biantennary complex type N-glycans; does neither cleave larger complex type glycans nor oligomannose and nor hybrid-type glycans. Specifically acts on IgGs; does not act on immunoglobulin alpha, beta, delta or mu. In Streptococcus dysgalactiae, this protein is Endo-beta-N-acetylglucosaminidase EndoSd.